A 146-amino-acid chain; its full sequence is MKSLYLIFGLWILLACFQSGEGVRGPRRQHNPRRQQDPSTLPHYLGLQPDPNGGQIGVTITIPLNLQPPRVLVNLPGFITGPPLVVQGTTEYQYQWQLTAPDPTPLSNPPTQLHSTEQANTKTDAKISNTTATTQNSTDIFEGGGK.

Positions 1-22 are cleaved as a signal peptide; the sequence is MKSLYLIFGLWILLACFQSGEG. 2 disordered regions span residues 23–43 and 99–146; these read VRGP…TLPH and TAPD…GGGK. Over residues 109–139 the composition is skewed to polar residues; sequence PPTQLHSTEQANTKTDAKISNTTATTQNSTD. N-linked (GlcNAc...) asparagine glycans are attached at residues Asn-129 and Asn-136.

Post-translationally, several O-linked glycosylation sites might be present in the C-terminal part. As to expression, expressed predominantly in the acinar cells of the submandibular gland and to lesser extent in the prostate.

Its subcellular location is the secreted. Functionally, sialorphin may be involved in the modulation of mineral balance between at least four systems: kidney, bone, tooth and circulation. Submandibular gland peptide T is able to directly or indirectly down-regulate cardiovascular depression induced by septic shock (endotoxin stimuli), or anaphylactic challenge (nematode antigen sensitization). In terms of biological role, sialorphin is an endogenous inhibitor of neprilysin. Inhibits the breakdown of Met-enkephalin and substance P in isolated tissue from the dorsal zone of the rat spinal cord. Has an analgesic effect when administered to rats by intravenous injection. This chain is SMR1 protein (Vcsa1), found in Rattus norvegicus (Rat).